We begin with the raw amino-acid sequence, 344 residues long: Serpentine receptor class delta-3 (344 aa).

The next 7 membrane-spanning stretches (helical) occupy residues 21–41 (IIGY…IILI), 54–74 (MLHL…MLAL), 102–122 (FLHV…MISF), 142–162 (ICIL…SDVA), 203–223 (FSAI…IVFF), 259–279 (IVPI…FQVV), and 287–307 (MPFR…LYFV).

The protein belongs to the nematode receptor-like protein srd family.

The protein resides in the membrane. This is Serpentine receptor class delta-3 (srd-3) from Caenorhabditis elegans.